The chain runs to 274 residues: Large ribosomal subunit protein uL2cz/uL2cy (274 aa).

Disordered stretches follow at residues 1–20 (MAIH…AVDS) and 223–274 (MNPV…RRSK).

The protein belongs to the universal ribosomal protein uL2 family. In terms of assembly, part of the 50S ribosomal subunit.

The protein resides in the plastid. The protein localises to the chloroplast. The polypeptide is Large ribosomal subunit protein uL2cz/uL2cy (rpl2-A) (Eucalyptus globulus subsp. globulus (Tasmanian blue gum)).